The primary structure comprises 316 residues: Cell surface superoxide dismutase [Cu-Zn] 6 (316 aa).

The signal sequence occupies residues 1 to 18 (MIFIPIIILIYLVSIAAS). Residues H78, H80, and H96 each contribute to the Cu cation site. H96 and D119 together coordinate Zn(2+). An N-linked (GlcNAc...) asparagine glycan is attached at N128. H159 is a binding site for Cu cation. N-linked (GlcNAc...) asparagine glycosylation is found at N162 and N240. The interval 243-263 (DNVYSPEETRPSDQNKKSHRH) is disordered. The segment covering 249-258 (EETRPSDQNK) has biased composition (basic and acidic residues). N278 and N281 each carry an N-linked (GlcNAc...) asparagine glycan. S288 carries GPI-anchor amidated serine lipidation. The propeptide at 289–316 (SDCLNDGMMVTGSVFGSLVLGIAAGIFV) is removed in mature form.

The protein belongs to the Cu-Zn superoxide dismutase family. It depends on Cu cation as a cofactor. Zn(2+) serves as cofactor. In terms of processing, the GPI-anchor is attached to the protein in the endoplasmic reticulum and serves to target the protein to the cell surface. There, the glucosamine-inositol phospholipid moiety is cleaved off and the GPI-modified mannoprotein is covalently attached via its lipidless GPI glycan remnant to the 1,6-beta-glucan of the outer cell wall layer.

Its subcellular location is the secreted. It is found in the cell wall. The protein localises to the membrane. The catalysed reaction is 2 superoxide + 2 H(+) = H2O2 + O2. Functionally, superoxide dismutases serve to convert damaging superoxide radicals, a key form of ROS, to less damaging hydrogen peroxide that can be converted into water by catalase action. May be involved protection against extracellular stress. In Candida albicans (strain SC5314 / ATCC MYA-2876) (Yeast), this protein is Cell surface superoxide dismutase [Cu-Zn] 6 (SOD6).